We begin with the raw amino-acid sequence, 1141 residues long: DNA-directed RNA polymerase subunit beta (1141 aa).

It belongs to the RNA polymerase beta chain family. In terms of assembly, the RNAP catalytic core consists of 2 alpha, 1 beta, 1 beta' and 1 omega subunit. When a sigma factor is associated with the core the holoenzyme is formed, which can initiate transcription.

It carries out the reaction RNA(n) + a ribonucleoside 5'-triphosphate = RNA(n+1) + diphosphate. Functionally, DNA-dependent RNA polymerase catalyzes the transcription of DNA into RNA using the four ribonucleoside triphosphates as substrates. This chain is DNA-directed RNA polymerase subunit beta, found in Frankia casuarinae (strain DSM 45818 / CECT 9043 / HFP020203 / CcI3).